A 930-amino-acid chain; its full sequence is Alanine--tRNA ligase (930 aa).

4 residues coordinate Zn(2+): His595, His599, Cys700, and His704.

This sequence belongs to the class-II aminoacyl-tRNA synthetase family. It depends on Zn(2+) as a cofactor.

It localises to the cytoplasm. The enzyme catalyses tRNA(Ala) + L-alanine + ATP = L-alanyl-tRNA(Ala) + AMP + diphosphate. Catalyzes the attachment of alanine to tRNA(Ala) in a two-step reaction: alanine is first activated by ATP to form Ala-AMP and then transferred to the acceptor end of tRNA(Ala). Also edits incorrectly charged Ser-tRNA(Ala) and Gly-tRNA(Ala) via its editing domain. In Malacoplasma penetrans (strain HF-2) (Mycoplasma penetrans), this protein is Alanine--tRNA ligase.